The chain runs to 473 residues: UDP-N-acetylmuramate--L-alanine ligase (473 aa).

112–118 (GTHGKTT) serves as a coordination point for ATP.

It belongs to the MurCDEF family.

The protein localises to the cytoplasm. It catalyses the reaction UDP-N-acetyl-alpha-D-muramate + L-alanine + ATP = UDP-N-acetyl-alpha-D-muramoyl-L-alanine + ADP + phosphate + H(+). The protein operates within cell wall biogenesis; peptidoglycan biosynthesis. Cell wall formation. This Nitrosomonas europaea (strain ATCC 19718 / CIP 103999 / KCTC 2705 / NBRC 14298) protein is UDP-N-acetylmuramate--L-alanine ligase.